A 100-amino-acid polypeptide reads, in one-letter code: Co-chaperonin GroES (100 aa).

It belongs to the GroES chaperonin family. As to quaternary structure, heptamer of 7 subunits arranged in a ring. Interacts with the chaperonin GroEL.

The protein localises to the cytoplasm. In terms of biological role, together with the chaperonin GroEL, plays an essential role in assisting protein folding. The GroEL-GroES system forms a nano-cage that allows encapsulation of the non-native substrate proteins and provides a physical environment optimized to promote and accelerate protein folding. GroES binds to the apical surface of the GroEL ring, thereby capping the opening of the GroEL channel. This Mycolicibacterium paratuberculosis (strain ATCC BAA-968 / K-10) (Mycobacterium paratuberculosis) protein is Co-chaperonin GroES.